The primary structure comprises 938 residues: Isoleucine--tRNA ligase (938 aa).

Positions 58–68 (PYANGHLHMGH) match the 'HIGH' region motif. An L-isoleucyl-5'-AMP-binding site is contributed by Glu-566. The 'KMSKS' region motif lies at 607–611 (KMSKS). Lys-610 contributes to the ATP binding site. 4 residues coordinate Zn(2+): Cys-906, Cys-909, Cys-926, and Cys-929.

This sequence belongs to the class-I aminoacyl-tRNA synthetase family. IleS type 1 subfamily. Monomer. Zn(2+) is required as a cofactor.

The protein resides in the cytoplasm. The enzyme catalyses tRNA(Ile) + L-isoleucine + ATP = L-isoleucyl-tRNA(Ile) + AMP + diphosphate. Catalyzes the attachment of isoleucine to tRNA(Ile). As IleRS can inadvertently accommodate and process structurally similar amino acids such as valine, to avoid such errors it has two additional distinct tRNA(Ile)-dependent editing activities. One activity is designated as 'pretransfer' editing and involves the hydrolysis of activated Val-AMP. The other activity is designated 'posttransfer' editing and involves deacylation of mischarged Val-tRNA(Ile). The chain is Isoleucine--tRNA ligase from Desulfovibrio desulfuricans (strain ATCC 27774 / DSM 6949 / MB).